Here is a 291-residue protein sequence, read N- to C-terminus: Gamma-sarcoglycan (291 aa).

Residues leucine 38–leucine 58 traverse the membrane as a helical; Signal-anchor for type II membrane protein segment. Topologically, residues arginine 59 to leucine 291 are extracellular. The N-linked (GlcNAc...) asparagine glycan is linked to asparagine 110. 2 disulfides stabilise this stretch: cysteine 265/cysteine 290 and cysteine 267/cysteine 283.

It belongs to the sarcoglycan beta/delta/gamma/zeta family. As to quaternary structure, interacts with the syntrophin SNTA1. Cross-link to form 2 major subcomplexes: one consisting of SGCB, SGCD and SGCG and the other consisting of SGCB and SGCD. The association between SGCB and SGCG is particularly strong while SGCA is loosely associated with the other sarcoglycans. Interacts with FLNC. In terms of processing, disulfide bonds are present.

It is found in the cell membrane. The protein localises to the sarcolemma. Its subcellular location is the cytoplasm. It localises to the cytoskeleton. Component of the sarcoglycan complex, a subcomplex of the dystrophin-glycoprotein complex which forms a link between the F-actin cytoskeleton and the extracellular matrix. In Bos taurus (Bovine), this protein is Gamma-sarcoglycan (SGCG).